The following is a 332-amino-acid chain: Adenosine deaminase (332 aa).

Residues histidine 12 and histidine 14 each contribute to the Zn(2+) site. Residues histidine 14, aspartate 16, and glycine 170 each contribute to the substrate site. A Zn(2+)-binding site is contributed by histidine 197. Glutamate 200 serves as the catalytic Proton donor. Aspartate 278 provides a ligand contact to Zn(2+).

It belongs to the metallo-dependent hydrolases superfamily. Adenosine and AMP deaminases family. Adenosine deaminase subfamily. Zn(2+) is required as a cofactor.

It catalyses the reaction adenosine + H2O + H(+) = inosine + NH4(+). It carries out the reaction 2'-deoxyadenosine + H2O + H(+) = 2'-deoxyinosine + NH4(+). Catalyzes the hydrolytic deamination of adenosine and 2-deoxyadenosine. The chain is Adenosine deaminase from Clostridium perfringens (strain SM101 / Type A).